We begin with the raw amino-acid sequence, 3948 residues long: Hybrid PKS-NRPS synthetase ucsA (3948 aa).

The Ketosynthase family 3 (KS3) domain maps to 11–440 (NEPIAVIGSG…GTNAHAILER (430 aa)). Catalysis depends on for beta-ketoacyl synthase activity residues C184, H323, and H363. Positions 548–881 (IFTGQGAQWP…FSTAIGQLWA (334 aa)) are malonyl-CoA:ACP transacylase (MAT) domain. An N-terminal hotdog fold region spans residues 940–1079 (HPLLGTLGAD…GHIRLTITDF (140 aa)). Residues 940–1254 (HPLLGTLGAD…IRLIPFAAAS (315 aa)) are dehydratase (DH) domain. Positions 940 to 1256 (HPLLGTLGAD…LIPFAAASEA (317 aa)) constitute a PKS/mFAS DH domain. H972 functions as the Proton acceptor; for dehydratase activity in the catalytic mechanism. The C-terminal hotdog fold stretch occupies residues 1098-1256 (MTEVDQNLFY…LIPFAAASEA (159 aa)). D1161 (proton donor; for dehydratase activity) is an active-site residue. Residues 1299-1460 (LAHVVGQITH…LRAGFTGVET (162 aa)) are methyltransferase (MT) domain. The ketoreductase (KR) domain stretch occupies residues 1989 to 2165 (TYILFGLAGA…ASVIDIGPIS (177 aa)). The region spanning 2275–2357 (DVARVLRHAI…GLVDFAVDNL (83 aa)) is the Carrier 1 domain. S2317 is modified (O-(pantetheine 4'-phosphoryl)serine). Positions 2381–2404 (PKAKTDAPAAAPTPASATAPGSKS) are enriched in low complexity. The tract at residues 2381 to 2473 (PKAKTDAPAA…SSQAASLESS (93 aa)) is disordered. 2 stretches are compositionally biased toward polar residues: residues 2405–2418 (DGNVSSIARSADQS) and 2426–2437 (PQPTAILTNATA). The span at 2441–2456 (PVSPSLSVTGSTSSAA) shows a compositional bias: low complexity. The span at 2462-2473 (PTSSQAASLESS) shows a compositional bias: polar residues. Residues 2489–2926 (EKTLPMSYGQ…PQIFNSSKVQ (438 aa)) are condensation (C) domain. The segment at 2950–3355 (DIAAVQPTLT…GEFVLQARIK (406 aa)) is adenylation (A) (KR) domain. Positions 3483–3507 (PLTNKGGLKETPVARPTRYQNDPIP) are disordered. In terms of domain architecture, Carrier 2 spans 3513–3592 (SSPFSSLDQV…QMASLLDGKD (80 aa)). S3552 is subject to O-(pantetheine 4'-phosphoryl)serine. The reductase (R) domain stretch occupies residues 3633-3852 (LTGATGFLGL…QFVPVEDVAN (220 aa)).

The protein in the C-terminal section; belongs to the NRP synthetase family.

It functions in the pathway mycotoxin biosynthesis. Hybrid PKS-NRPS synthetase; part of the gene cluster that mediates the biosynthesis of UCS1025A, a member of the pyrrolizidinone family that acts as a strong telomerase inhibitor and displays potent antibacterial and antitumor properties. These compounds share a hemiaminal-containing pyrrolizidinone core fused with a gamma-lactone, giving a furopyrrolizidine that is connected to a decalin fragment. The polyketide synthase module (PKS) of the PKS-NRPS ucsA is responsible for the synthesis of the polyketide backbone via the condensation of an acetyl-CoA starter unit with 6 malonyl-CoA units. The downstream nonribosomal peptide synthetase (NRPS) module then amidates the carboxyl end of the polyketide with a 2S,3S-methylproline derived from L-isoleucine by the 2-oxoglutarate-dependent dioxygenase ucsF which converts L-isoleucine to (4S,5S)-4-methylpyrroline-5-carboxylate that is further converted to 2S,3S-methylproline by the pyrroline-5-carboxylate reductase ucsG. Reductive release of the completed aminoacyl polyketide from the assembly line can form the 3-pyrrolin-2-one structure via an intramolecular Knoevenagel reaction. Because ucsA lacks a designated enoylreductase (ER) domain, the required activity is provided the enoyl reductase ucsL. This keto acyclic precursor is the substrate of the Diels-Alderase ucsH, that catalyzes the Diels-Alder cycloaddition. Oxidation of the 3S-methyl group to a carboxylate by the cytochrome P450 monooxygenase ucsK allows an oxa-Michael cyclization that might involve the reductase/dehydrogenase ucsI and which furnishes the furopyrrolizidine. The oxidase ucsJ likely plays a critical role in stereoselective reduction of the C5-C6 double bond to afford the required R-configured carboxylate group. Further enolization and oxidation at C5 by an unidentified enzyme affords the last intermediate that can undergo oxa-Michael cyclization to yield UCS1025A. The protein is Hybrid PKS-NRPS synthetase ucsA of Acremonium sp.